Here is a 339-residue protein sequence, read N- to C-terminus: MKVGILGGSGYAGAELYRLLLNHPNFNVTFISSEKYAGKPVEKMLKGFAHNGHSHNLRFNHLDDLPFDLDFVFSALPTGVLPKYVEKILEKTSLIFNVSGDFRFKDATTLQQYYPETLAIESDQILSSYYIPEFSDFDKNANIINLPGCMALASIYAAYPLVKNKLINPNIFVDVKTGSSGAGKSTKETAADRFGNFRLYRAFNHRHLPEIAMALGSSVGKVGFAAYSLDISRGIYASVYSQIKKGVTEVDVKKAYFKTYKSCKFVANLTGKQSVPMLKSTNGTNFAEVKATVHEGQCIAVVSLDNLLKGAAGQAVQAANKYYQLVEDTGLDTLAGMWP.

The active site involves Cys-149.

This sequence belongs to the NAGSA dehydrogenase family. Type 1 subfamily.

The protein resides in the cytoplasm. The catalysed reaction is N-acetyl-L-glutamate 5-semialdehyde + phosphate + NADP(+) = N-acetyl-L-glutamyl 5-phosphate + NADPH + H(+). It participates in amino-acid biosynthesis; L-arginine biosynthesis; N(2)-acetyl-L-ornithine from L-glutamate: step 3/4. Catalyzes the NADPH-dependent reduction of N-acetyl-5-glutamyl phosphate to yield N-acetyl-L-glutamate 5-semialdehyde. The polypeptide is N-acetyl-gamma-glutamyl-phosphate reductase 1 (Lactiplantibacillus plantarum (strain ATCC BAA-793 / NCIMB 8826 / WCFS1) (Lactobacillus plantarum)).